Reading from the N-terminus, the 147-residue chain is Two-component response regulator ORR11 (147 aa).

The Response regulatory domain occupies 29-146 (HVLAVDDSSV…DVSRLFSRVL (118 aa)). The residue at position 79 (D79) is a 4-aspartylphosphate.

It belongs to the ARR family. Type-A subfamily. Two-component system major event consists of a His-to-Asp phosphorelay between a sensor histidine kinase (HK) and a response regulator (RR). In plants, the His-to-Asp phosphorelay involves an additional intermediate named Histidine-containing phosphotransfer protein (HPt). This multistep phosphorelay consists of a His-Asp-His-Asp sequential transfer of a phosphate group between first a His and an Asp of the HK protein, followed by the transfer to a conserved His of the HPt protein and finally the transfer to an Asp in the receiver domain of the RR protein.

Functionally, functions as a response regulator involved in His-to-Asp phosphorelay signal transduction system. Phosphorylation of the Asp residue in the receiver domain activates the ability of the protein to promote the transcription of target genes. Type-A response regulators seem to act as negative regulators of the cytokinin signaling. This chain is Two-component response regulator ORR11, found in Oryza sativa subsp. indica (Rice).